Here is a 1069-residue protein sequence, read N- to C-terminus: MDDKASVGKISVSSDSVSTLNSEDFVLVSRQGDETPSTNNGSDDEKTGLKIVGNGSEQQLQKELADVLMDPPMDDQPGEKELVKRSQLDGEGDGPLSNQLSASSTINPVPLVGLQKPEMSLPVKPGQGDSEASSPFTPVADEDSVVFSKLTYLGCASVNAPRSEVEALRMMSILRSQCQISLDVTLSVPNVSEGIVRLLDPQTNTEIANYPIYKILFCVRGHDGTPESDCFAFTESHYNAELFRIHVFRCEIQEAVSRILYSFATAFRRSAKQTPLSATAAPQTPDSDIFTFSVSLEIKEDDGKGYFSAVPKDKDRQCFKLRQGIDKKIVIYVQQTTNKELAIERCFGLLLSPGKDVRNSDMHLLDLESMGKSSDGKSYVITGSWNPKSPHFQVVNEETPKDKVLFMTTAVDLVITEVQEPVRFLLETKVRVCSPNERLFWPFSKRSTTENFFLKLKQIKQKERKNNTDTLYEVVCLESESERERRKTTASPSVRLPQSGSQSSVIPSPPEDDEEEDNDEPLLSGSGDVSKECAEKILETWGELLSKWHLNLNVRPKQLSSLVRNGVPEALRGEVWQLLAGCHNNDHLVEKYRILITKESPQDSAITRDINRTFPAHDYFKDTGGDGQDSLYKICKAYSVYDEEIGYCQGQSFLAAVLLLHMPEEQAFSVLVKIMFDYGLRELFKQNFEDLHCKFYQLERLMQEYIPDLYNHFLDISLEAHMYASQWFLTLFTAKFPLYMVFHIIDLLLCEGISVIFNVALGLLKTSKDDLLLTDFEGALKFFRVQLPKRYRSEENAKKLMELACNMKISQKKLKKYEKEYHTMREQQAQQEDPIERFERENRRLQEANMRLEQENDDLAHELVTSKIALRKDLDNAEEKADALNKELLMTKQKLIDAEEEKRRLEEESAQLKEMCRRELDKAESEIKKNSSIIGDYKQICSQLSERLEKQQTANKVEIEKIRQKVDDCERCREFFNKEGRVKGISSTKEVLDEDTDEEKETLKNQLREMELELAQTKLQLVEAECKIQDLEHHLGLALNEVQAAKKTWFNRTLSSIKTATGVQGKETC.

Residues 1–79 (MDDKASVGKI…DPPMDDQPGE (79 aa)) form a disordered region. Low complexity predominate over residues 7-22 (VGKISVSSDSVSTLNS). The residue at position 42 (serine 42) is a Phosphoserine. Positions 142–298 (EDSVVFSKLT…IFTFSVSLEI (157 aa)) constitute a PID domain. Serine 360 is modified (phosphoserine). The disordered stretch occupies residues 482 to 527 (ERERRKTTASPSVRLPQSGSQSSVIPSPPEDDEEEDNDEPLLSGSG). Residues 489–506 (TASPSVRLPQSGSQSSVI) show a composition bias toward polar residues. Residues 510 to 520 (PEDDEEEDNDE) are compositionally biased toward acidic residues. Residues 566-752 (GVPEALRGEV…HIIDLLLCEG (187 aa)) enclose the Rab-GAP TBC domain. Positions 798 to 1047 (KKLMELACNM…ALNEVQAAKK (250 aa)) form a coiled coil. Position 996 is a phosphothreonine (threonine 996).

In terms of assembly, interacts with RAB6A and tubulin gamma.

The protein resides in the cytoplasm. It localises to the cytosol. The protein localises to the cytoskeleton. It is found in the microtubule organizing center. Its subcellular location is the centrosome. In terms of biological role, may act as a GTPase-activating protein of RAB6A. May play a role in microtubule nucleation by centrosome. May participate in a RAB6A-mediated pathway involved in the metaphase-anaphase transition. The chain is Rab GTPase-activating protein 1 from Pongo abelii (Sumatran orangutan).